A 77-amino-acid polypeptide reads, in one-letter code: Acyl carrier protein (77 aa).

The region spanning 2–77 is the Carrier domain; the sequence is SNIEERVKKI…AAIDYVNSAQ (76 aa). At S37 the chain carries O-(pantetheine 4'-phosphoryl)serine.

The protein belongs to the acyl carrier protein (ACP) family. Post-translationally, 4'-phosphopantetheine is transferred from CoA to a specific serine of apo-ACP by AcpS. This modification is essential for activity because fatty acids are bound in thioester linkage to the sulfhydryl of the prosthetic group.

It is found in the cytoplasm. The protein operates within lipid metabolism; fatty acid biosynthesis. Its function is as follows. Carrier of the growing fatty acid chain in fatty acid biosynthesis. This is Acyl carrier protein from Vibrio campbellii (strain ATCC BAA-1116).